We begin with the raw amino-acid sequence, 268 residues long: Ribosome maturation factor RimP (268 aa).

Disordered regions lie at residues 1–41 (MGSA…GRGG) and 223–268 (LVEP…EMTR). Residues 32–41 (PSGSARGRGG) show a composition bias toward low complexity. A compositionally biased stretch (basic and acidic residues) spans 248 to 257 (ESNDDGREAG).

The protein belongs to the RimP family.

The protein resides in the cytoplasm. Its function is as follows. Required for maturation of 30S ribosomal subunits. This chain is Ribosome maturation factor RimP, found in Frankia casuarinae (strain DSM 45818 / CECT 9043 / HFP020203 / CcI3).